The chain runs to 148 residues: D-aminoacyl-tRNA deacylase (148 aa).

Positions 137 to 138 (GP) match the Gly-cisPro motif, important for rejection of L-amino acids motif.

Belongs to the DTD family. Homodimer.

The protein resides in the cytoplasm. The enzyme catalyses glycyl-tRNA(Ala) + H2O = tRNA(Ala) + glycine + H(+). The catalysed reaction is a D-aminoacyl-tRNA + H2O = a tRNA + a D-alpha-amino acid + H(+). An aminoacyl-tRNA editing enzyme that deacylates mischarged D-aminoacyl-tRNAs. Also deacylates mischarged glycyl-tRNA(Ala), protecting cells against glycine mischarging by AlaRS. Acts via tRNA-based rather than protein-based catalysis; rejects L-amino acids rather than detecting D-amino acids in the active site. By recycling D-aminoacyl-tRNA to D-amino acids and free tRNA molecules, this enzyme counteracts the toxicity associated with the formation of D-aminoacyl-tRNA entities in vivo and helps enforce protein L-homochirality. In Oenococcus oeni (strain ATCC BAA-331 / PSU-1), this protein is D-aminoacyl-tRNA deacylase.